We begin with the raw amino-acid sequence, 85 residues long: ATP synthase subunit c (85 aa).

2 consecutive transmembrane segments (helical) span residues 22-39 and 65-85; these read AIGAGLAVIGAGLGIGKI and AALIEGVALLAVVVCLLVFFL.

The protein belongs to the ATPase C chain family. F-type ATPases have 2 components, F(1) - the catalytic core - and F(0) - the membrane proton channel. F(1) has five subunits: alpha(3), beta(3), gamma(1), delta(1), epsilon(1). F(0) has three main subunits: a(1), b(2) and c(10-14). The alpha and beta chains form an alternating ring which encloses part of the gamma chain. F(1) is attached to F(0) by a central stalk formed by the gamma and epsilon chains, while a peripheral stalk is formed by the delta and b chains.

The protein resides in the cell inner membrane. Its function is as follows. F(1)F(0) ATP synthase produces ATP from ADP in the presence of a proton or sodium gradient. F-type ATPases consist of two structural domains, F(1) containing the extramembraneous catalytic core and F(0) containing the membrane proton channel, linked together by a central stalk and a peripheral stalk. During catalysis, ATP synthesis in the catalytic domain of F(1) is coupled via a rotary mechanism of the central stalk subunits to proton translocation. Key component of the F(0) channel; it plays a direct role in translocation across the membrane. A homomeric c-ring of between 10-14 subunits forms the central stalk rotor element with the F(1) delta and epsilon subunits. The protein is ATP synthase subunit c of Bacteroides thetaiotaomicron (strain ATCC 29148 / DSM 2079 / JCM 5827 / CCUG 10774 / NCTC 10582 / VPI-5482 / E50).